Reading from the N-terminus, the 270-residue chain is FKBP-type peptidyl-prolyl cis-trans isomerase FkpA (270 aa).

Residues 1-25 (MKSLFKVTLLATTMAVALHAPITFA) form the signal peptide. Positions 164–249 (SDTVVVNYKG…VFDVELLDVK (86 aa)) constitute a PPIase FKBP-type domain.

The protein belongs to the FKBP-type PPIase family.

The protein localises to the periplasm. The enzyme catalyses [protein]-peptidylproline (omega=180) = [protein]-peptidylproline (omega=0). In terms of biological role, PPIases accelerate the folding of proteins. It catalyzes the cis-trans isomerization of proline imidic peptide bonds in oligopeptides. The polypeptide is FKBP-type peptidyl-prolyl cis-trans isomerase FkpA (fkpA) (Escherichia coli O157:H7).